A 236-amino-acid chain; its full sequence is Protein EVI2A (236 aa).

An N-terminal signal peptide occupies residues 1–30; that stretch reads MPTDMEHTGHYLHLAFLMTTVFSLSPGTKA. 5 N-linked (GlcNAc...) asparagine glycosylation sites follow: Asn31, Asn38, Asn49, Asn73, and Asn112. Residues 31 to 133 lie on the Extracellular side of the membrane; the sequence is NYTRLWANST…DVCAENNNNM (103 aa). The helical transmembrane segment at 134 to 154 threads the bilayer; the sequence is AMLICLIIIAVLFLICTFLFL. The Cytoplasmic segment spans residues 155-236; that stretch reads STVVLANKVS…TEKLTNKQIG (82 aa). Ser211 carries the post-translational modification Phosphoserine. Residues 217 to 236 form a disordered region; that stretch reads ATRERKDEEGTEKLTNKQIG. Residues 218–236 are compositionally biased toward basic and acidic residues; the sequence is TRERKDEEGTEKLTNKQIG.

Belongs to the EVI2A family.

Its subcellular location is the membrane. In terms of biological role, may complex with itself or/and other proteins within the membrane, to function as part of a cell-surface receptor. This Homo sapiens (Human) protein is Protein EVI2A (EVI2A).